A 258-amino-acid chain; its full sequence is 5'-nucleotidase SurE (258 aa).

A divalent metal cation-binding residues include Asp8, Asp9, Ser39, and Asn95.

This sequence belongs to the SurE nucleotidase family. The cofactor is a divalent metal cation.

It is found in the cytoplasm. It catalyses the reaction a ribonucleoside 5'-phosphate + H2O = a ribonucleoside + phosphate. In terms of biological role, nucleotidase that shows phosphatase activity on nucleoside 5'-monophosphates. The chain is 5'-nucleotidase SurE from Methanobrevibacter smithii (strain ATCC 35061 / DSM 861 / OCM 144 / PS).